A 175-amino-acid chain; its full sequence is uncharacterized protein (175 aa).

Transmembrane regions (helical) follow at residues 25–45 (MIAI…TTIS), 46–66 (ATGP…FFLL), 97–117 (FAGW…LTAV), 124–144 (WLPG…LTLL), and 155–175 (TEFW…VTGI).

It belongs to the amino acid-polyamine-organocation (APC) superfamily.

It is found in the cell membrane. This is an uncharacterized protein from Lactobacillus delbrueckii subsp. lactis.